Here is a 194-residue protein sequence, read N- to C-terminus: tRNA (guanine-N(1)-)-methyltransferase (194 aa).

S-adenosyl-L-methionine is bound by residues glycine 78 and 97 to 102 (IGDYVL).

The protein belongs to the RNA methyltransferase TrmD family. In terms of assembly, homodimer.

Its subcellular location is the cytoplasm. The catalysed reaction is guanosine(37) in tRNA + S-adenosyl-L-methionine = N(1)-methylguanosine(37) in tRNA + S-adenosyl-L-homocysteine + H(+). Specifically methylates guanosine-37 in various tRNAs. The polypeptide is tRNA (guanine-N(1)-)-methyltransferase (Mycoplasma mobile (strain ATCC 43663 / 163K / NCTC 11711) (Mesomycoplasma mobile)).